Here is a 1229-residue protein sequence, read N- to C-terminus: uncharacterized protein (1229 aa).

An N-terminal signal peptide occupies residues 1–19 (MKYFLLLFLLVLSFTLVES). Asn238, Asn270, Asn370, Asn538, Asn691, and Asn701 each carry an N-linked (GlcNAc...) asparagine glycan. The Galectin 1 domain occupies 678–813 (RMVNFANVME…QWNIDTVKMN (136 aa)). Positions 818-829 (HTTTVEPSTPLE) are enriched in polar residues. The tract at residues 818–903 (HTTTVEPSTP…TLPPTTTPYN (86 aa)) is disordered. A compositionally biased stretch (low complexity) spans 830–846 (TASTSQSTPSATLTSTT). Positions 847–869 (ENIPSTSKIPETSTTQRPTSPIL) are enriched in polar residues. Positions 870-901 (TSGATSTSSSTESTTTSPTTSTTTTLPPTTTP) are enriched in low complexity. 3 N-linked (GlcNAc...) asparagine glycosylation sites follow: Asn903, Asn938, and Asn948. Positions 925 to 1059 (RPVVFSRYME…ESTIDTVSMA (135 aa)) constitute a Galectin 2 domain. Residues 1061-1087 (VRPPTTPTTTTSTTTTTTPKLTTTSTL) form a disordered region. Residues 1067-1087 (PTTTTSTTTTTTPKLTTTSTL) show a composition bias toward low complexity. Asn1146 is a glycosylation site (N-linked (GlcNAc...) asparagine).

This is an uncharacterized protein from Caenorhabditis elegans.